The sequence spans 689 residues: Elongation factor G (689 aa).

The tr-type G domain maps to 8–282; that stretch reads ERTRNIGIMA…GVVAYMPSPL (275 aa). GTP is bound by residues 17–24, 81–85, and 135–138; these read AHIDAGKT, DTPGH, and NKMD.

It belongs to the TRAFAC class translation factor GTPase superfamily. Classic translation factor GTPase family. EF-G/EF-2 subfamily.

The protein localises to the cytoplasm. In terms of biological role, catalyzes the GTP-dependent ribosomal translocation step during translation elongation. During this step, the ribosome changes from the pre-translocational (PRE) to the post-translocational (POST) state as the newly formed A-site-bound peptidyl-tRNA and P-site-bound deacylated tRNA move to the P and E sites, respectively. Catalyzes the coordinated movement of the two tRNA molecules, the mRNA and conformational changes in the ribosome. This chain is Elongation factor G, found in Alkaliphilus metalliredigens (strain QYMF).